Consider the following 160-residue polypeptide: Ribosomal RNA large subunit methyltransferase H (160 aa).

Residues leucine 76, glycine 108, and phenylalanine 127 to tryptophan 132 each bind S-adenosyl-L-methionine.

It belongs to the RNA methyltransferase RlmH family. Homodimer.

Its subcellular location is the cytoplasm. The enzyme catalyses pseudouridine(1915) in 23S rRNA + S-adenosyl-L-methionine = N(3)-methylpseudouridine(1915) in 23S rRNA + S-adenosyl-L-homocysteine + H(+). Functionally, specifically methylates the pseudouridine at position 1915 (m3Psi1915) in 23S rRNA. This Mesorhizobium japonicum (strain LMG 29417 / CECT 9101 / MAFF 303099) (Mesorhizobium loti (strain MAFF 303099)) protein is Ribosomal RNA large subunit methyltransferase H.